We begin with the raw amino-acid sequence, 356 residues long: Transcription factor ATOH1 (356 aa).

The span at 1 to 21 (MSRLLHAEEWAEVKELGDHHR) shows a compositional bias: basic and acidic residues. 2 disordered regions span residues 1–56 (MSRL…PELS) and 92–125 (SEAA…GPVK). Residues 26-40 (HHLPQPPPPPPPQPP) show a composition bias toward pro residues. Residues 96–109 (APRDEVDGRGELVR) show a composition bias toward basic and acidic residues. Residues 110–124 (RSSGGASSSKSPGPV) show a composition bias toward low complexity. One can recognise a bHLH domain in the interval 161–213 (QRRLAANARERRRMHGLNHAFDQLRNVIPSFNNDKKLSKYETLQMAQIYINAL). 2 disordered regions span residues 218-279 (QTPS…TRFS) and 314-356 (SPSL…DEAS). Low complexity predominate over residues 252 to 266 (NATAAGAQQASGGSQ). The segment covering 337–356 (HRSDGEFSPHSHYSDSDEAS) has biased composition (basic and acidic residues).

Efficient DNA binding requires dimerization with another bHLH protein.

The protein resides in the nucleus. Its function is as follows. Transcriptional regulator. Activates E box-dependent transcription in collaboration with TCF3/E47, but the activity is completely antagonized by the negative regulator of neurogenesis HES1. Plays a role in the differentiation of subsets of neural cells by activating E box-dependent transcription. In Pan troglodytes (Chimpanzee), this protein is Transcription factor ATOH1.